The chain runs to 397 residues: Elongation factor Tu-1 (397 aa).

One can recognise a tr-type G domain in the interval 10-206 (KPHVNIGTIG…AVDENIPEPE (197 aa)). The tract at residues 19–26 (GHIDHGKT) is G1. 19–26 (GHIDHGKT) is a binding site for GTP. Thr-26 provides a ligand contact to Mg(2+). The segment at 62-66 (GITIS) is G2. A G3 region spans residues 83–86 (DCPG). GTP-binding positions include 83-87 (DCPGH) and 138-141 (NKAD). The tract at residues 138 to 141 (NKAD) is G4. A G5 region spans residues 176 to 178 (SAL). Thr-386 carries the post-translational modification Phosphothreonine.

It belongs to the TRAFAC class translation factor GTPase superfamily. Classic translation factor GTPase family. EF-Tu/EF-1A subfamily. In terms of assembly, monomer. Post-translationally, phosphorylated on threonine and serine.

It localises to the cytoplasm. The enzyme catalyses GTP + H2O = GDP + phosphate + H(+). Its function is as follows. GTP hydrolase that promotes the GTP-dependent binding of aminoacyl-tRNA to the A-site of ribosomes during protein biosynthesis. In Streptomyces collinus, this protein is Elongation factor Tu-1.